A 128-amino-acid polypeptide reads, in one-letter code: DNA-directed RNA polymerase subunit omega (128 aa).

The protein belongs to the RNA polymerase subunit omega family. As to quaternary structure, the RNAP catalytic core consists of 2 alpha, 1 beta, 1 beta' and 1 omega subunit. When a sigma factor is associated with the core the holoenzyme is formed, which can initiate transcription.

It carries out the reaction RNA(n) + a ribonucleoside 5'-triphosphate = RNA(n+1) + diphosphate. Functionally, promotes RNA polymerase assembly. Latches the N- and C-terminal regions of the beta' subunit thereby facilitating its interaction with the beta and alpha subunits. This Azorhizobium caulinodans (strain ATCC 43989 / DSM 5975 / JCM 20966 / LMG 6465 / NBRC 14845 / NCIMB 13405 / ORS 571) protein is DNA-directed RNA polymerase subunit omega.